A 311-amino-acid chain; its full sequence is tRNA dimethylallyltransferase (311 aa).

Position 9-16 (9-16 (GPTAVGKT)) interacts with ATP. Residue 11-16 (TAVGKT) participates in substrate binding. Residues 34 to 37 (DSMQ) form an interaction with substrate tRNA region.

It belongs to the IPP transferase family. Monomer. Mg(2+) is required as a cofactor.

It carries out the reaction adenosine(37) in tRNA + dimethylallyl diphosphate = N(6)-dimethylallyladenosine(37) in tRNA + diphosphate. Functionally, catalyzes the transfer of a dimethylallyl group onto the adenine at position 37 in tRNAs that read codons beginning with uridine, leading to the formation of N6-(dimethylallyl)adenosine (i(6)A). This Clostridium botulinum (strain Hall / ATCC 3502 / NCTC 13319 / Type A) protein is tRNA dimethylallyltransferase.